The chain runs to 351 residues: UDP-N-acetylenolpyruvoylglucosamine reductase (351 aa).

The FAD-binding PCMH-type domain occupies 11 to 213 (GVGGSIACFI…KQVRDQVLRI (203 aa)). Residue Arg-158 is part of the active site. Ser-239 (proton donor) is an active-site residue. Glu-343 is a catalytic residue.

This sequence belongs to the MurB family. It depends on FAD as a cofactor.

The protein localises to the cytoplasm. The enzyme catalyses UDP-N-acetyl-alpha-D-muramate + NADP(+) = UDP-N-acetyl-3-O-(1-carboxyvinyl)-alpha-D-glucosamine + NADPH + H(+). It participates in cell wall biogenesis; peptidoglycan biosynthesis. Functionally, cell wall formation. The protein is UDP-N-acetylenolpyruvoylglucosamine reductase of Tropheryma whipplei (strain Twist) (Whipple's bacillus).